The primary structure comprises 1050 residues: Toll-like receptor 7 (1050 aa).

A signal peptide spans Met-1 to Gly-26. At Phe-27–Asp-837 the chain is on the extracellular side. 20 LRR repeats span residues Ile-42–Pro-64, Thr-65–Arg-87, Asn-89–Val-111, Leu-126–Ser-149, His-151–Glu-170, Leu-171–Ile-195, Met-203–Asn-226, Leu-228–Asn-247, Leu-248–Cys-273, Asn-275–Leu-289, Thr-290–Asn-312, Arg-314–His-337, Leu-339–His-364, Leu-369–Val-392, Leu-396–His-419, Glu-421–Gly-443, His-493–His-516, Leu-517–Leu-542, Arg-543–Glu-565, and Gln-567–Met-589. N-linked (GlcNAc...) asparagine glycosylation is found at Asn-66 and Asn-69. Residues Asn-167, Asn-190, and Asn-215 are each glycosylated (N-linked (GlcNAc...) asparagine). Asn-387 is a glycosylation site (N-linked (GlcNAc...) asparagine). 2 N-linked (GlcNAc...) asparagine glycosylation sites follow: Asn-524 and Asn-535. Asn-591 carries N-linked (GlcNAc...) asparagine glycosylation. LRR repeat units follow at residues Leu-596–Ser-619, Asp-620–Asp-645, Leu-650–Gly-673, Pro-675–Leu-698, Leu-699–Cys-722, Lys-724–Asp-746, Ala-747–Glu-770, and Leu-773–Val-796. N-linked (GlcNAc...) asparagine glycans are attached at residues Asn-680 and Asn-721. A glycan (N-linked (GlcNAc...) asparagine) is linked at Asn-800. Residues Leu-838–Met-858 traverse the membrane as a helical segment. Over Thr-859–Val-1050 the chain is Cytoplasmic. The TIR domain occupies Ser-890–Leu-1034.

It belongs to the Toll-like receptor family. In terms of assembly, homodimer. Interacts with MYD88 via their respective TIR domains. Interacts with UNC93B1. Interacts with SMPDL3B. The first cleavage is performed by asparagine endopeptidase or cathepsin family members. This initial cleavage event is followed by a trimming event that is solely cathepsin mediated and required for optimal receptor signaling.

It is found in the endosome membrane. The protein resides in the endoplasmic reticulum membrane. Its subcellular location is the lysosome. The protein localises to the cytoplasmic vesicle. It localises to the phagosome. Its activity is regulated as follows. Activated by guanosine analogs including deoxyguanosine, 7-thia-8-oxoguanosine or 7-deazaguanosine in a RNA-independent manner. Functionally, endosomal receptor that plays a key role in innate and adaptive immunity. Controls host immune response against pathogens through recognition of uridine-containing single strand RNAs (ssRNAs) of viral origin or guanosine analogs. Upon binding to agonists, undergoes dimerization that brings TIR domains from the two molecules into direct contact, leading to the recruitment of TIR-containing downstream adapter MYD88 through homotypic interaction. In turn, the Myddosome signaling complex is formed involving IRAK4, IRAK1, TRAF6, TRAF3 leading to activation of downstream transcription factors NF-kappa-B and IRF7 to induce pro-inflammatory cytokines and interferons, respectively. In plasmacytoid dendritic cells, RNASET2 endonuclease cooperates with PLD3 or PLD4 5'-&gt;3' exonucleases to process RNA and release 2',3'-cyclic guanosine monophosphate (2',3'-cGMP) and cytidine-rich RNA fragments that occupy TLR7 ligand-binding pockets and trigger a signaling-competent state. The chain is Toll-like receptor 7 (Tlr7) from Mus musculus (Mouse).